The primary structure comprises 214 residues: Ribosomal protein uL16-like (214 aa).

The protein belongs to the universal ribosomal protein uL16 family. As to quaternary structure, component of a male germ cell-specific 60S large ribosomal subunit (LSU), which contains RPL10L and RPL39L, instead of RPL10 and RPL39 paralogs. The composition of the rest of the complex is similar to classical ribosomes. As to expression, almost testis-specific. Also expressed in pre- and postmenopausal ovary.

Its subcellular location is the cytoplasm. In terms of biological role, testis-specific component of the ribosome, which is required for the transition from prophase to metaphase in male meiosis I. Compensates for the inactivated X-linked RPL10 paralog during spermatogenesis. The ribosome is a large ribonucleoprotein complex responsible for the synthesis of proteins in the cell. The male germ cell-specific ribosome displays a ribosomal polypeptide exit tunnel of distinct size and charge states compared with the classical ribosome. It is responsible for regulating the biosynthesis and folding of a subset of male germ-cell-specific proteins that are essential for the formation of sperm. This is Ribosomal protein uL16-like from Homo sapiens (Human).